Reading from the N-terminus, the 336-residue chain is tRNA N6-adenosine threonylcarbamoyltransferase (336 aa).

Fe cation contacts are provided by His-114 and His-118. Substrate-binding positions include 136–140, Asp-169, Gly-182, Asp-186, and Asn-275; that span reads LVSGG. Asp-301 serves as a coordination point for Fe cation.

This sequence belongs to the KAE1 / TsaD family. Fe(2+) is required as a cofactor.

Its subcellular location is the cytoplasm. The catalysed reaction is L-threonylcarbamoyladenylate + adenosine(37) in tRNA = N(6)-L-threonylcarbamoyladenosine(37) in tRNA + AMP + H(+). Required for the formation of a threonylcarbamoyl group on adenosine at position 37 (t(6)A37) in tRNAs that read codons beginning with adenine. Is involved in the transfer of the threonylcarbamoyl moiety of threonylcarbamoyl-AMP (TC-AMP) to the N6 group of A37, together with TsaE and TsaB. TsaD likely plays a direct catalytic role in this reaction. The protein is tRNA N6-adenosine threonylcarbamoyltransferase of Streptococcus pneumoniae serotype 4 (strain ATCC BAA-334 / TIGR4).